The chain runs to 226 residues: MKAIKIAIDGPASSGKSTVAKIIAKNLGYTYLDTGAMYRSATYIALTHGYTGKEVALILEELEKNPISFKKAKDGSQLVFLGDEDVTLAIRQNDVTNNVSWVSALPEIREELVHQQRRIAQAGGIIMDGRDIGTVVLPDAELKIFLVASVEERAERRYKENLEKGIESDFETLKEEIAARDYKDSHRKVSPLKAAEDALIFDTTGVSIDGVVQFIQEKAEKIVDMS.

10–18 (GPASSGKST) contributes to the ATP binding site.

This sequence belongs to the cytidylate kinase family. Type 1 subfamily.

The protein localises to the cytoplasm. The catalysed reaction is CMP + ATP = CDP + ADP. It carries out the reaction dCMP + ATP = dCDP + ADP. The sequence is that of Cytidylate kinase from Streptococcus pyogenes serotype M28 (strain MGAS6180).